We begin with the raw amino-acid sequence, 393 residues long: Prokineticin receptor 1 (393 aa).

Over 1 to 63 (MEITMGVMDE…NSRTFFAAKI (63 aa)) the chain is Extracellular. Residues Asn-11, Asn-14, and Asn-36 are each glycosylated (N-linked (GlcNAc...) asparagine). A helical transmembrane segment spans residues 64-84 (VIGMALVGIMLVCGIGNFIFI). Topologically, residues 85–98 (AALARYKKLRNLTN) are cytoplasmic. A helical transmembrane segment spans residues 99 to 119 (LLIANLAISDFLVAIVCCPFE). Residues 120–145 (MDYYVVRQLSWEHGHVLCASVNYLRT) lie on the Extracellular side of the membrane. The cysteines at positions 137 and 217 are disulfide-linked. Residues 146-166 (VSLYVSTNALLAIAIDRYLAI) traverse the membrane as a helical segment. Topologically, residues 167 to 179 (VHPLRPRMKYQTA) are cytoplasmic. Residues 180-200 (TGLIALVWVVSILVAIPSAYF) traverse the membrane as a helical segment. Over 201–232 (TTETVLVIVKSQEKIFCGQIWPVDQQIYYKSY) the chain is Extracellular. Residues 233 to 253 (FLFIFGIEFVGPVVTMTLCYA) form a helical membrane-spanning segment. At 254–282 (RISRELWFKAVPGFQTEQIRKRLRCRRKT) the chain is on the cytoplasmic side. The chain crosses the membrane as a helical span at residues 283-303 (VLVLMCILTAYVLCWAPFYGF). Over 304–322 (AIVRDFFPTVFVKEKHYLT) the chain is Extracellular. Residues 323–343 (AFYVVECIAMSNSMINTVCFV) traverse the membrane as a helical segment. Residues 344–393 (TVKNNTIKYFKKIMLLHWKASYNGSKSSGDLDLKTTGVPATEEVDCIGLK) lie on the Cytoplasmic side of the membrane.

The protein belongs to the G-protein coupled receptor 1 family.

It is found in the cell membrane. Receptor for prokineticin 1. Exclusively coupled to the G(q) subclass of heteromeric G proteins. Activation leads to mobilization of calcium, stimulation of phosphoinositide turnover and activation of p44/p42 mitogen-activated protein kinase. May play a role during early pregnancy. The polypeptide is Prokineticin receptor 1 (PROKR1) (Bos taurus (Bovine)).